A 372-amino-acid chain; its full sequence is 4-hydroxy-3-methylbut-2-en-1-yl diphosphate synthase (flavodoxin) (372 aa).

[4Fe-4S] cluster is bound by residues C270, C273, C305, and E312.

This sequence belongs to the IspG family. The cofactor is [4Fe-4S] cluster.

It catalyses the reaction (2E)-4-hydroxy-3-methylbut-2-enyl diphosphate + oxidized [flavodoxin] + H2O + 2 H(+) = 2-C-methyl-D-erythritol 2,4-cyclic diphosphate + reduced [flavodoxin]. It participates in isoprenoid biosynthesis; isopentenyl diphosphate biosynthesis via DXP pathway; isopentenyl diphosphate from 1-deoxy-D-xylulose 5-phosphate: step 5/6. Its function is as follows. Converts 2C-methyl-D-erythritol 2,4-cyclodiphosphate (ME-2,4cPP) into 1-hydroxy-2-methyl-2-(E)-butenyl 4-diphosphate. This chain is 4-hydroxy-3-methylbut-2-en-1-yl diphosphate synthase (flavodoxin), found in Idiomarina loihiensis (strain ATCC BAA-735 / DSM 15497 / L2-TR).